Reading from the N-terminus, the 167-residue chain is Putative defense protein Hdd11-like (167 aa).

Residues 1–18 form the signal peptide; the sequence is MMFTYVVAVASVVALTSA. A Reelin domain is found at 19-167; sequence YPTGAPPSAC…ESAPVKVLSH (149 aa). Cysteines 28 and 105 form a disulfide.

It belongs to the insect defense protein family. As to expression, in larvae, high expression in the fat body and low expression in midgut, hemocytes and malpighian tubules. No expression in silkgland.

It localises to the secreted. May have antimicrobial activity. This is Putative defense protein Hdd11-like from Samia ricini (Indian eri silkmoth).